The following is a 437-amino-acid chain: Tol-Pal system protein TolB (437 aa).

The signal sequence occupies residues 1–23; sequence MQKRHPIIYLLITLLIFVPVSYG.

It belongs to the TolB family. In terms of assembly, the Tol-Pal system is composed of five core proteins: the inner membrane proteins TolA, TolQ and TolR, the periplasmic protein TolB and the outer membrane protein Pal. They form a network linking the inner and outer membranes and the peptidoglycan layer.

It is found in the periplasm. Part of the Tol-Pal system, which plays a role in outer membrane invagination during cell division and is important for maintaining outer membrane integrity. The chain is Tol-Pal system protein TolB from Coxiella burnetii (strain RSA 493 / Nine Mile phase I).